Reading from the N-terminus, the 629-residue chain is Phosphatidylinositol-3,5-bisphosphate 3-phosphatase MTMR8 (629 aa).

In terms of domain architecture, Myotubularin phosphatase spans Gly126–Tyr500. The a 1,2-diacyl-sn-glycero-3-phospho-(1D-myo-inositol-3,5-bisphosphate) site is built by Asn250, Asn275, and Ile276. Residues Asn250, Asn275, and Ile276 each contribute to the a 1,2-diacyl-sn-glycero-3-phospho-(1D-myo-inositol-3-phosphate) site. Residue Cys338 is the Phosphocysteine intermediate of the active site. Residues Ser339, Asp340, Gly341, Trp342, Asp343, Arg344, Lys380, and Arg384 each contribute to the a 1,2-diacyl-sn-glycero-3-phospho-(1D-myo-inositol-3,5-bisphosphate) site. A 1,2-diacyl-sn-glycero-3-phospho-(1D-myo-inositol-3-phosphate)-binding residues include Ser339, Asp340, Gly341, Trp342, Asp343, and Arg344. Residues Ser339 and Asp340 each coordinate phosphate. Positions 342, 343, and 344 each coordinate phosphate. Arg384 lines the a 1,2-diacyl-sn-glycero-3-phospho-(1D-myo-inositol-3-phosphate) pocket. Residues Leu517–Gly543 adopt a coiled-coil conformation.

Belongs to the protein-tyrosine phosphatase family. Non-receptor class myotubularin subfamily. Homodimer.

Its subcellular location is the nucleus envelope. It carries out the reaction a 1,2-diacyl-sn-glycero-3-phospho-(1D-myo-inositol-3,5-bisphosphate) + H2O = a 1,2-diacyl-sn-glycero-3-phospho-(1D-myo-inositol-5-phosphate) + phosphate. The catalysed reaction is a 1,2-diacyl-sn-glycero-3-phospho-(1D-myo-inositol-3-phosphate) + H2O = a 1,2-diacyl-sn-glycero-3-phospho-(1D-myo-inositol) + phosphate. The enzyme catalyses 1,2-dioctanoyl-sn-glycero-3-phospho-(1D-myo-inositol-3,5-bisphosphate) + H2O = 1,2-dioctanoyl-sn-glycero-3-phospho-(1D-myo-inositol-5-phosphate) + phosphate. Functionally, lipid phosphatase that specifically dephosphorylates the D-3 position of phosphatidylinositol 3-phosphate and phosphatidylinositol 3,5-bisphosphate, generating phosphatidylinositol and phosphatidylinositol 5-phosphate. In Gallus gallus (Chicken), this protein is Phosphatidylinositol-3,5-bisphosphate 3-phosphatase MTMR8.